Consider the following 133-residue polypeptide: Small ribosomal subunit protein uS9 (133 aa).

Residues Arg-98–Ala-113 are compositionally biased toward basic and acidic residues. A disordered region spans residues Arg-98–Arg-133. Positions Lys-114–Arg-133 are enriched in basic residues.

Belongs to the universal ribosomal protein uS9 family.

This Synechococcus sp. (strain CC9902) protein is Small ribosomal subunit protein uS9.